The following is a 529-amino-acid chain: Cytochrome P450 monooxygenase 136 (529 aa).

A helical membrane pass occupies residues 9-29 (SPLALAVLSIATCQLALVWWY). C447 contributes to the heme binding site.

It belongs to the cytochrome P450 family. Requires heme as cofactor.

Its subcellular location is the membrane. It functions in the pathway secondary metabolite biosynthesis. Cytochrome P450 monooxygenase that is able to use delta(6)-protoilludene as a substrate to produce delta(6)-protoilludene-5-ol. The chain is Cytochrome P450 monooxygenase 136 from Postia placenta (strain ATCC 44394 / Madison 698-R) (Brown rot fungus).